Reading from the N-terminus, the 45-residue chain is Psychimicin (45 aa).

Cystine bridges form between Cys10-Cys24, Cys14-Cys36, and Cys25-Cys42.

In terms of assembly, monomer. As to expression, hemolymph.

It localises to the secreted. Functionally, has antimicrobial activity. Is particularly active against fungi, and to a lesser extent against Gram-positive and Gram-negative bacteria. The sequence is that of Psychimicin from Oiketicus kirbyi (Bagworm moth).